A 402-amino-acid polypeptide reads, in one-letter code: Probable tRNA pseudouridine synthase tag-124 (402 aa).

The active-site Nucleophile is D85. Positions 383 to 402 (SKKEKMAEKKKNGEESSDKL) are disordered.

Belongs to the tRNA pseudouridine synthase TruA family.

It carries out the reaction a uridine in tRNA = a pseudouridine in tRNA. Its function is as follows. Formation of pseudouridine at position 38 and 39 in the anticodon stem and loop of transfer RNAs. The chain is Probable tRNA pseudouridine synthase tag-124 (tag-124) from Caenorhabditis elegans.